Here is a 133-residue protein sequence, read N- to C-terminus: Small ribosomal subunit protein uS8 (133 aa).

It belongs to the universal ribosomal protein uS8 family. As to quaternary structure, part of the 30S ribosomal subunit. Contacts proteins S5 and S12.

One of the primary rRNA binding proteins, it binds directly to 16S rRNA central domain where it helps coordinate assembly of the platform of the 30S subunit. The protein is Small ribosomal subunit protein uS8 of Endomicrobium trichonymphae.